We begin with the raw amino-acid sequence, 1722 residues long: Signal-induced proliferation-associated 1-like protein 2 (1722 aa).

Residues 1 to 12 are compositionally biased toward basic and acidic residues; it reads MSDPRQSQEEKH. 2 disordered regions span residues 1–29 and 42–72; these read MSDPRQSQEEKHKLGRASSKFKDPPRIMQ and NGNMGPTTSLNASNSNETGGGGPANGTPAVP. Polar residues predominate over residues 45–56; sequence MGPTTSLNASNS. The residue at position 148 (S148) is a Phosphoserine. The segment covering 360–377 has biased composition (polar residues); it reads GASAASQTQMPTGQTGNC. The tract at residues 360-401 is disordered; it reads GASAASQTQMPTGQTGNCESPLGSKEDLNSKENLDADEGDGK. 2 positions are modified to phosphoserine: S379 and S383. Residues 383–401 are compositionally biased toward basic and acidic residues; the sequence is SKEDLNSKENLDADEGDGK. In terms of domain architecture, Rap-GAP spans 595-812; that stretch reads LLKLDEQGLS…RTRQEYLKDL (218 aa). The 77-residue stretch at 950–1026 folds into the PDZ domain; that stretch reads EMTLRRNGLG…VKVVIIQPHD (77 aa). S1029 bears the Phosphoserine mark. Disordered stretches follow at residues 1067 to 1245 and 1330 to 1360; these read HRVP…FGSG and EGSMGDLSEISSHSSGSHHSGSPSAHCSKSS. Composition is skewed to low complexity over residues 1093 to 1102 and 1119 to 1130; these read QQLLQQAQAA and SSPSNQSSSSDP. Composition is skewed to basic and acidic residues over residues 1164 to 1183 and 1194 to 1217; these read DGAREREDTMEASRHPETKW and YKERALQKDGSCKDSPNKLSHIGD. The span at 1219–1236 shows a compositional bias: low complexity; the sequence is SCSSHSSSNTLSSNTSSN. S1244 is modified (phosphoserine). Over residues 1337–1360 the composition is skewed to low complexity; the sequence is SEISSHSSGSHHSGSPSAHCSKSS. S1461, S1472, S1478, S1488, S1549, S1552, and S1591 each carry phosphoserine. Residues 1654–1712 are a coiled coil; the sequence is LTGKVNQLELILRQLQTDLRKEKQDKAVLQAEVQHLRQDNMRLQEESQTATAQLRKFTE.

The chain is Signal-induced proliferation-associated 1-like protein 2 (SIPA1L2) from Homo sapiens (Human).